The chain runs to 502 residues: Zinc finger C3HC-type protein 1 (502 aa).

At alanine 2 the chain carries N-acetylalanine. Position 24 is a phosphoserine (serine 24). Threonine 28 bears the Phosphothreonine mark. The disordered stretch occupies residues isoleucine 36–threonine 73. The span at threonine 52–serine 72 shows a compositional bias: polar residues. Phosphoserine is present on residues serine 58 and serine 62. Threonine 84 is subject to Phosphothreonine. The C3HC-type zinc-finger motif lies at cysteine 102–cysteine 156. The tract at residues leucine 170–threonine 210 is F-box-like. Residues serine 302–serine 423 are disordered. Phosphoserine is present on residues serine 321 and serine 329. The segment covering threonine 327 to serine 338 has biased composition (polar residues). Residue threonine 333 is modified to Phosphothreonine. Phosphoserine occurs at positions 335, 338, 344, 354, 359, and 370. The segment covering arginine 351–proline 360 has biased composition (polar residues). Residues proline 371–arginine 380 are compositionally biased toward low complexity. Position 381 is a phosphoserine (serine 381). Phosphothreonine occurs at positions 384 and 387. Serine 395 carries the phosphoserine modification. The Nuclear localization signal signature appears at proline 396 to arginine 402. A phosphoserine mark is found at serine 407 and serine 483. Positions serine 407–threonine 422 are enriched in low complexity.

As to quaternary structure, interacts with TPR; this interaction mediates ZC3HC1 nuclear envelopes (NE)-association but also required for proper positioning of a substantial amount of TPR at the nuclear basket (NB). Phosphorylated. May also be weakly phosphorylated on Tyr residues. In terms of tissue distribution, widely expressed. Highly expressed in heart, skeletal muscle and testis. Expressed in brain, placenta, lung, kidney, liver, pancreas, spleen, thymus, prostate, ovary small intestine and colon. Weakly or not expressed in leukocytes.

It is found in the nucleus. It localises to the nucleus envelope. Functionally, required for proper positioning of a substantial amount of TPR at the nuclear basket (NB) through interaction with TPR. This is Zinc finger C3HC-type protein 1 from Homo sapiens (Human).